The sequence spans 566 residues: MPGDEETLDLPAWNRVPDLTWGPHHRSAMASLDSEVREECLREDLKFYFMSPCEKYRARRQIPWKLGLQILKIVMVTTQLVRFGLSNQLVVAFKEDNTVAFKHLFLKGFSGVDEDDYSCSIYTQENTYESIFFAIKQYRHLKNISLATLGYGESEDNRTGLKVCKQHYKTGAMFSSNETLNIDSDIETDCIHLDLQVLTTEPEDWAQTSFFRLDFYRLVQVDISFALKGIDLQAVHSREIPDCYLFQNTITFDNTAHSGKIKIYLNSEANIEECKNMNISGSTQRSTHYLLVFDVFVIMICLASLILCTRSIVLALRLRKRFLNFFLEKYKQRVCGADQWEFVNGWYVLVTISDLMTIIGSILKMEIKAKKLTNYDVCSILLGTSTLFVWVGVIRYLGYFQTYNVLILTMQASLPKVLRFCACAGMIYLGYTFCGWIVLGPYHEKFENLNIVAECLFSLVNGDDMFATFAQIQQKSILVWLFSRLYLYSFISLFIYMVLSLFIALITDSYHTIKKYQQHGFPETDLQKFLKESGSKDGYQKQPSALLSCLCCLRRRRSNDHLILID.

Topologically, residues 1–65 are cytoplasmic; that stretch reads MPGDEETLDL…YRARRQIPWK (65 aa). Residues 66-86 form a helical membrane-spanning segment; sequence LGLQILKIVMVTTQLVRFGLS. Residues 87–288 lie on the Extracellular side of the membrane; it reads NQLVVAFKED…ISGSTQRSTH (202 aa). Positions 107-123 are extracellular/lumenal pore loop; the sequence is KGFSGVDEDDYSCSIYT. 2 cysteine pairs are disulfide-bonded: cysteine 164–cysteine 190 and cysteine 243–cysteine 274. The helical transmembrane segment at 289–309 threads the bilayer; it reads YLLVFDVFVIMICLASLILCT. At 310–346 the chain is on the cytoplasmic side; that stretch reads RSIVLALRLRKRFLNFFLEKYKQRVCGADQWEFVNGW. Residues 347–367 form a helical membrane-spanning segment; it reads YVLVTISDLMTIIGSILKMEI. Residues 368–376 are Extracellular-facing; sequence KAKKLTNYD. The helical transmembrane segment at 377 to 397 threads the bilayer; the sequence is VCSILLGTSTLFVWVGVIRYL. The Cytoplasmic segment spans residues 398–419; it reads GYFQTYNVLILTMQASLPKVLR. Residues 420–440 traverse the membrane as a helical segment; that stretch reads FCACAGMIYLGYTFCGWIVLG. Residues 441 to 448 lie on the Extracellular side of the membrane; that stretch reads PYHEKFEN. The pore-forming intramembrane region spans 449–469; the sequence is LNIVAECLFSLVNGDDMFATF. Positions 461–464 match the Selectivity filter motif; that stretch reads NGDD. The Extracellular segment spans residues 470–480; sequence AQIQQKSILVW. The chain crosses the membrane as a helical span at residues 481-502; it reads LFSRLYLYSFISLFIYMVLSLF. Over 503–566 the chain is Cytoplasmic; sequence IALITDSYHT…RSNDHLILID (64 aa).

The protein belongs to the transient receptor (TC 1.A.4) family. Polycystin subfamily. MCOLN2 sub-subfamily. In terms of assembly, forms homooligomeric complexes; probably tetrameric. Can heterooligomerize with MCOLN1; heteromeric assemblies have different channel properties as compared to the respective homooligomers and may be tissue-specific. Interacts with TMEM176A. Expressed in activated macrophages and microglia (at protein level). As to expression, isoform 1 is widely expressed at very low levels. In terms of tissue distribution, isoform 2 is expressed at high levels in lymphoid tissues (thymus and spleen) and kidney, and at moderate levels in heart, lung, liver and stomach.

The protein resides in the cell membrane. Its subcellular location is the lysosome membrane. The protein localises to the recycling endosome membrane. The enzyme catalyses Ca(2+)(in) = Ca(2+)(out). The catalysed reaction is Fe(2+)(in) = Fe(2+)(out). With respect to regulation, fe(2+) channel activity is potentiated by low pH. Functionally, nonselective cation channel probably playing a role in the regulation of membrane trafficking events. Acts as a Ca(2+)-permeable cation channel with inwardly rectifying activity. May activate ARF6 and be involved in the trafficking of GPI-anchored cargo proteins to the cell surface via the ARF6-regulated recycling pathway. May play a role in immune processes. In adaptive immunity, TRPML2 and TRPML1 may play redundant roles in the function of the specialized lysosomes of B cells. In the innate immune response, may play a role in the regulation of chemokine secretion and macrophage migration. Through a possible and probably tissue-specific heteromerization with MCOLN1 may be at least in part involved in many lysosome-dependent cellular events. Also functions as a Fe(2+) permeable channel. The protein is Mucolipin-2 (Mcoln2) of Mus musculus (Mouse).